The primary structure comprises 209 residues: MIGLVGKKVGMTRIFTEDGVSIPVTVIEIEANRVTQVKSLENDGYRAVQVTTGAKKANRVTKPEAGHFAKAGVEAGRGLWEFRLPEGQEFTAGQEISVEIFADVKKVDVTGTSKGKGFAGTVKRWNFRTQDATHGNSLSHRVPGSIGQNQTPGKVFKGKKMAGHLGDERVTVQSLDVVRVDAERNLLLVKGAVPGATGGNLIVKPAVKA.

The interval 133 to 152 is disordered; it reads THGNSLSHRVPGSIGQNQTP. Gln150 is modified (N5-methylglutamine).

It belongs to the universal ribosomal protein uL3 family. In terms of assembly, part of the 50S ribosomal subunit. Forms a cluster with proteins L14 and L19. Post-translationally, methylated by PrmB.

In terms of biological role, one of the primary rRNA binding proteins, it binds directly near the 3'-end of the 23S rRNA, where it nucleates assembly of the 50S subunit. The protein is Large ribosomal subunit protein uL3 of Yersinia enterocolitica serotype O:8 / biotype 1B (strain NCTC 13174 / 8081).